Consider the following 1238-residue polypeptide: Lysine-specific demethylase JMJ703 (1238 aa).

Residues 56–79 (EECQPSAAVSRSDTPCSTSGTQTC) are disordered. Residues 62–79 (AAVSRSDTPCSTSGTQTC) show a composition bias toward polar residues. Positions 154-195 (APVFYPTEEEFEDTLKYIESIRPMAEPYGICRIVPPSSWKPP) constitute a JmjN domain. Residues 215–266 (KVDKLQNRKSSKKGRRGGMMKRRKLAESEENSATAHTQTGMQQSPERFGFEP) form a disordered region. Basic residues predominate over residues 221–238 (NRKSSKKGRRGGMMKRRK). The segment covering 245–259 (NSATAHTQTGMQQSP) has biased composition (polar residues). The JmjC domain maps to 348–514 (KYAQSGWNLN…IGHNAVELYR (167 aa)). Residues histidine 394, glutamate 396, and histidine 482 each coordinate Fe cation. 4 disordered regions span residues 699 to 725 (GPRR…QKDE), 777 to 798 (YNGG…SSPS), 834 to 863 (TGDS…SSLE), and 910 to 978 (ASSQ…LQRT). Residues 706–719 (SQASAVSLVSSSTS) show a composition bias toward low complexity. Residues 910–923 (ASSQQFVRTGPWTQ) show a composition bias toward polar residues. Positions 924–936 (SASHEASSPSTSA) are enriched in low complexity. Over residues 964-978 (SFSNQQPNDGRLQRT) the composition is skewed to polar residues. Residues 1019–1077 (VVHRFKCSVEPLEIGVVLSGRLWSSSQAIFPKGFRSRVKYFSIVDPIQMAYYISEILDA) enclose the FYR N-terminal domain. Positions 1079–1169 (MQGPLFMVKL…HICTEYWRSR (91 aa)) constitute an FYR C-terminal domain.

The cofactor is Fe(2+). In terms of tissue distribution, expressed in roots, leaf sheaths, stems and panicles.

It localises to the nucleus. It catalyses the reaction N(6),N(6),N(6)-trimethyl-L-lysyl(4)-[histone H3] + 3 2-oxoglutarate + 3 O2 = L-lysyl(4)-[histone H3] + 3 formaldehyde + 3 succinate + 3 CO2. Histone demethylase that demethylates 'Lys-4' (H3K4me) of histone H3 with a specific activity for H3K4me3, H3K4me2 and H3K4me1. No activity on H3K9me3/2/1, H3K27me3/2/1 and H3K36me3/2/1. Involved in the control of stem elongation by regulating methylation states of H3K4me3 on cytokinin oxidase (CKX) gene family, which may cause increased expression of CKX genes and reduced cytokinin levels. Prevents ectopic retrotransposition by regulating the levels of H3K4me3 in two non-LTR retrotransposons KARMA and LINE-1 (L1) and reinforcing their repressed states. In Oryza sativa subsp. japonica (Rice), this protein is Lysine-specific demethylase JMJ703 (JMJ703).